The chain runs to 197 residues: Pyridoxal 5'-phosphate synthase subunit PdxT (197 aa).

52-54 provides a ligand contact to L-glutamine; it reads GES. Residue C83 is the Nucleophile of the active site. L-glutamine-binding positions include R115 and 142-143; that span reads IR. Residues H178 and E180 each act as charge relay system in the active site.

This sequence belongs to the glutaminase PdxT/SNO family. As to quaternary structure, in the presence of PdxS, forms a dodecamer of heterodimers. Only shows activity in the heterodimer.

The enzyme catalyses aldehydo-D-ribose 5-phosphate + D-glyceraldehyde 3-phosphate + L-glutamine = pyridoxal 5'-phosphate + L-glutamate + phosphate + 3 H2O + H(+). It carries out the reaction L-glutamine + H2O = L-glutamate + NH4(+). Its pathway is cofactor biosynthesis; pyridoxal 5'-phosphate biosynthesis. Its function is as follows. Catalyzes the hydrolysis of glutamine to glutamate and ammonia as part of the biosynthesis of pyridoxal 5'-phosphate. The resulting ammonia molecule is channeled to the active site of PdxS. The sequence is that of Pyridoxal 5'-phosphate synthase subunit PdxT from Korarchaeum cryptofilum (strain OPF8).